A 269-amino-acid polypeptide reads, in one-letter code: Bidirectional sugar transporter SWEET1a (269 aa).

The Extracellular portion of the chain corresponds to 1–6 (MEHIAR). A helical transmembrane segment spans residues 7 to 27 (FFFGVSGNVIALFLFLSPVVT). In terms of domain architecture, MtN3/slv 1 spans 8–96 (FFGVSGNVIA…IFLIFAVDRR (89 aa)). The Cytoplasmic segment spans residues 28–42 (FWRIIRKRSTEDFSG). A helical membrane pass occupies residues 43–63 (VPYNMTLLNCLLSAWYGLPFV). Topologically, residues 64 to 72 (SPNNILVST) are extracellular. The helical transmembrane segment at 73-93 (INGTGSVIEAIYVVIFLIFAV) threads the bilayer. At 94-100 (DRRARLR) the chain is on the cytoplasmic side. A helical membrane pass occupies residues 101–121 (MLGLLSIVVSIFATVVLVSLL). Over 122–129 (ALHGNARK) the chain is Extracellular. The chain crosses the membrane as a helical span at residues 130–150 (VFCGLAATIFSICMYASPLSI). The MtN3/slv 2 domain occupies 132-215 (CGLAATIFSI…ILYFIYRKNK (84 aa)). Over 151–164 (MRLVIKTKSVEYMP) the chain is Cytoplasmic. A helical transmembrane segment spans residues 165 to 185 (FLLSLAVFLCGTSWFIYGLLG). The Extracellular segment spans residues 186–189 (RDPF). The helical transmembrane segment at 190 to 210 (IIIPNGCGSFLGLVQLILYFI) threads the bilayer. Topologically, residues 211–269 (YRKNKGPAVPAGKGEAAAAADVEDAKKVAAAVEMADATTTNKAAADTVVGDGKVVASQV) are cytoplasmic.

This sequence belongs to the SWEET sugar transporter family. Forms homooligomers and/or heterooligomers.

The protein localises to the cell membrane. In terms of biological role, mediates both low-affinity uptake and efflux of sugar across the plasma membrane. The protein is Bidirectional sugar transporter SWEET1a of Sorghum bicolor (Sorghum).